The primary structure comprises 2208 residues: RNA-directed RNA polymerase L (2208 aa).

The tract at residues 26 to 284 (KEALLSQVEV…SHAGTTVPEC (259 aa)) is endonuclease. Mn(2+)-binding residues include Glu-51, Asp-89, and Glu-102. Residue Lys-115 is part of the active site. Positions 1172–1370 (CDMKMAVNNG…FLSSKLNKFV (199 aa)) constitute a RdRp catalytic domain. Mg(2+) is bound at residue Asp-1330.

The protein belongs to the Bunyavirales RNA polymerase family. As to quaternary structure, homomultimer; the oligomeric structure is essential for the polymerase activity. Interacts with nucleoprotein N. Interacts with protein Z; this interaction inhibits viral transcription and replication, Z partially blocks the product exit tunnel for the releasing nascent RNA product. Mn(2+) is required as a cofactor. It depends on Mg(2+) as a cofactor.

It localises to the virion. The protein resides in the host cytoplasm. The catalysed reaction is RNA(n) + a ribonucleoside 5'-triphosphate = RNA(n+1) + diphosphate. Its function is as follows. RNA-dependent RNA polymerase, which is responsible for the replication and transcription of the viral RNA genome using antigenomic RNA as an intermediate. During transcription, synthesizes subgenomic RNAs and assures their capping by a cap-snatching mechanism, which involves the endonuclease activity cleaving the host capped pre-mRNAs. These short capped RNAs are then used as primers for viral transcription. The 3'-end of subgenomic mRNAs molecules are heterogeneous and not polyadenylated. The replicase function is to direct synthesis of antigenomic and genomic RNA which are encapsidated and non capped. As a consequence of the use of the same enzyme for both transcription and replication, these mechanisms need to be well coordinated. These processes may be regulated by proteins N and Z in a dose-dependent manner. Z protein inhibits the viral polymerase L und thus the viral transcription and RNA synthesis. This is RNA-directed RNA polymerase L from Hylaeamys megacephalus (Large-headed rice rat).